A 210-amino-acid polypeptide reads, in one-letter code: Ribonuclease HII (210 aa).

The 190-residue stretch at 18 to 207 (RFVAGVDEVG…VHKILCKEET (190 aa)) folds into the RNase H type-2 domain. A divalent metal cation is bound by residues Asp24, Glu25, and Asp115.

This sequence belongs to the RNase HII family. Mn(2+) is required as a cofactor. Mg(2+) serves as cofactor.

The protein localises to the cytoplasm. The catalysed reaction is Endonucleolytic cleavage to 5'-phosphomonoester.. In terms of biological role, endonuclease that specifically degrades the RNA of RNA-DNA hybrids. The protein is Ribonuclease HII of Paracoccus denitrificans (strain Pd 1222).